We begin with the raw amino-acid sequence, 408 residues long: Succinylornithine transaminase (408 aa).

At K252 the chain carries N6-(pyridoxal phosphate)lysine.

It belongs to the class-III pyridoxal-phosphate-dependent aminotransferase family. AstC subfamily. It depends on pyridoxal 5'-phosphate as a cofactor.

The catalysed reaction is N(2)-succinyl-L-ornithine + 2-oxoglutarate = N-succinyl-L-glutamate 5-semialdehyde + L-glutamate. The protein operates within amino-acid degradation; L-arginine degradation via AST pathway; L-glutamate and succinate from L-arginine: step 3/5. In terms of biological role, catalyzes the transamination of N(2)-succinylornithine and alpha-ketoglutarate into N(2)-succinylglutamate semialdehyde and glutamate. Can also act as an acetylornithine aminotransferase. The polypeptide is Succinylornithine transaminase (Salmonella enteritidis PT4 (strain P125109)).